The chain runs to 628 residues: Chaperone protein HtpG (628 aa).

Positions methionine 1–arginine 340 are a; substrate-binding. The tract at residues glutamate 341–lysine 556 is b. Positions leucine 557–alanine 628 are c.

This sequence belongs to the heat shock protein 90 family. As to quaternary structure, homodimer.

It localises to the cytoplasm. In terms of biological role, molecular chaperone. Has ATPase activity. This Sodalis glossinidius (strain morsitans) protein is Chaperone protein HtpG.